We begin with the raw amino-acid sequence, 384 residues long: S-adenosylmethionine synthase (384 aa).

His-16 contacts ATP. Asp-18 is a binding site for Mg(2+). Glu-44 is a K(+) binding site. Glu-57 and Gln-100 together coordinate L-methionine. The interval 100–110 is flexible loop; it reads QSADIAMGVDE. Residues 165–167, Asp-240, 246–247, Ala-263, and Lys-267 contribute to the ATP site; these read DAK and RK. Asp-240 lines the L-methionine pocket. Position 271 (Lys-271) interacts with L-methionine.

Belongs to the AdoMet synthase family. Homotetramer; dimer of dimers. Requires Mg(2+) as cofactor. The cofactor is K(+).

It is found in the cytoplasm. The enzyme catalyses L-methionine + ATP + H2O = S-adenosyl-L-methionine + phosphate + diphosphate. Its pathway is amino-acid biosynthesis; S-adenosyl-L-methionine biosynthesis; S-adenosyl-L-methionine from L-methionine: step 1/1. In terms of biological role, catalyzes the formation of S-adenosylmethionine (AdoMet) from methionine and ATP. The overall synthetic reaction is composed of two sequential steps, AdoMet formation and the subsequent tripolyphosphate hydrolysis which occurs prior to release of AdoMet from the enzyme. The protein is S-adenosylmethionine synthase of Cellvibrio japonicus (strain Ueda107) (Pseudomonas fluorescens subsp. cellulosa).